We begin with the raw amino-acid sequence, 75 residues long: UPF0270 protein PSEEN1465 (75 aa).

It belongs to the UPF0270 family.

This chain is UPF0270 protein PSEEN1465, found in Pseudomonas entomophila (strain L48).